A 689-amino-acid polypeptide reads, in one-letter code: tRNA 5-methylaminomethyl-2-thiouridine biosynthesis bifunctional protein MnmC (689 aa).

Residues 1-245 (MNQRPIQTAT…KREMLTGTLP (245 aa)) form a tRNA (mnm(5)s(2)U34)-methyltransferase region. The segment at 270–689 (IGGGIVSALT…RSPATQESSR (420 aa)) is FAD-dependent cmnm(5)s(2)U34 oxidoreductase.

In the N-terminal section; belongs to the methyltransferase superfamily. tRNA (mnm(5)s(2)U34)-methyltransferase family. This sequence in the C-terminal section; belongs to the DAO family. FAD is required as a cofactor.

Its subcellular location is the cytoplasm. It catalyses the reaction 5-aminomethyl-2-thiouridine(34) in tRNA + S-adenosyl-L-methionine = 5-methylaminomethyl-2-thiouridine(34) in tRNA + S-adenosyl-L-homocysteine + H(+). Functionally, catalyzes the last two steps in the biosynthesis of 5-methylaminomethyl-2-thiouridine (mnm(5)s(2)U) at the wobble position (U34) in tRNA. Catalyzes the FAD-dependent demodification of cmnm(5)s(2)U34 to nm(5)s(2)U34, followed by the transfer of a methyl group from S-adenosyl-L-methionine to nm(5)s(2)U34, to form mnm(5)s(2)U34. In Yersinia pseudotuberculosis serotype I (strain IP32953), this protein is tRNA 5-methylaminomethyl-2-thiouridine biosynthesis bifunctional protein MnmC.